A 217-amino-acid polypeptide reads, in one-letter code: MSKISVAAVRQHVTDLLEYSNETKKRNFLETVELQIGLKNYDPQRDKRFSGTIRLPSIPRPNMSICILGDQHDIDRAKHGGVDAMSVDDLKKLNKNKKLIKKLARKYDAFVASEALIKQIPRLLGPGLSKAGKFPTPVSHSDDLTGKLNEVKSTIKFQLKKVLCMGVAVGNVGMTQEQLVGNIMLAINYLVSLLKKGWQNVGSLTIKATMSPPKRLY.

The protein belongs to the universal ribosomal protein uL1 family. In terms of assembly, component of the large ribosomal subunit (LSU). Mature N.crassa ribosomes consist of a small (40S) and a large (60S) subunit. The 40S small subunit contains 1 molecule of ribosomal RNA (18S rRNA) and at least 32 different proteins. The large 60S subunit contains 3 rRNA molecules (26S, 5.8S and 5S rRNA) and at least 42 different proteins. uL1 forms part of the L1 stalk.

The protein localises to the cytoplasm. Its function is as follows. Component of the ribosome, a large ribonucleoprotein complex responsible for the synthesis of proteins in the cell. The small ribosomal subunit (SSU) binds messenger RNAs (mRNAs) and translates the encoded message by selecting cognate aminoacyl-transfer RNA (tRNA) molecules. The large subunit (LSU) contains the ribosomal catalytic site termed the peptidyl transferase center (PTC), which catalyzes the formation of peptide bonds, thereby polymerizing the amino acids delivered by tRNAs into a polypeptide chain. The nascent polypeptides leave the ribosome through a tunnel in the LSU and interact with protein factors that function in enzymatic processing, targeting, and the membrane insertion of nascent chains at the exit of the ribosomal tunnel. uL1 forms part of the L1 stalk, a mobile element that plays a role in evacuating the exit-site tRNA. The sequence is that of Large ribosomal subunit protein uL1 (crp-74) from Neurospora crassa (strain ATCC 24698 / 74-OR23-1A / CBS 708.71 / DSM 1257 / FGSC 987).